The primary structure comprises 413 residues: Phosphopentomutase (413 aa).

Residues Asp11, Asp306, His311, Asp347, His348, and His359 each contribute to the Mn(2+) site.

This sequence belongs to the phosphopentomutase family. Mn(2+) is required as a cofactor.

It is found in the cytoplasm. The enzyme catalyses 2-deoxy-alpha-D-ribose 1-phosphate = 2-deoxy-D-ribose 5-phosphate. It catalyses the reaction alpha-D-ribose 1-phosphate = D-ribose 5-phosphate. Its pathway is carbohydrate degradation; 2-deoxy-D-ribose 1-phosphate degradation; D-glyceraldehyde 3-phosphate and acetaldehyde from 2-deoxy-alpha-D-ribose 1-phosphate: step 1/2. Isomerase that catalyzes the conversion of deoxy-ribose 1-phosphate (dRib-1-P) and ribose 1-phosphate (Rib-1-P) to deoxy-ribose 5-phosphate (dRib-5-P) and ribose 5-phosphate (Rib-5-P), respectively. The chain is Phosphopentomutase from Helicobacter pylori (strain HPAG1).